A 302-amino-acid chain; its full sequence is tRNA-cytidine(32) 2-sulfurtransferase (302 aa).

The short motif at 45-50 (SGGKDS) is the PP-loop motif element. Residues Cys-120, Cys-123, and Cys-211 each coordinate [4Fe-4S] cluster.

This sequence belongs to the TtcA family. Homodimer. The cofactor is Mg(2+). Requires [4Fe-4S] cluster as cofactor.

It localises to the cytoplasm. The catalysed reaction is cytidine(32) in tRNA + S-sulfanyl-L-cysteinyl-[cysteine desulfurase] + AH2 + ATP = 2-thiocytidine(32) in tRNA + L-cysteinyl-[cysteine desulfurase] + A + AMP + diphosphate + H(+). It functions in the pathway tRNA modification. Catalyzes the ATP-dependent 2-thiolation of cytidine in position 32 of tRNA, to form 2-thiocytidine (s(2)C32). The sulfur atoms are provided by the cysteine/cysteine desulfurase (IscS) system. The chain is tRNA-cytidine(32) 2-sulfurtransferase from Aeromonas salmonicida (strain A449).